A 398-amino-acid polypeptide reads, in one-letter code: SEC12-like protein 1 (398 aa).

The residue at position 1 (M1) is an N-acetylmethionine. The Cytoplasmic segment spans residues 1–337 (MEIEEASRES…TVPKEWKEWQ (337 aa)). WD repeat units lie at residues 71–110 (DSDG…TGIT), 120–159 (QNAG…VILD), 162–201 (KAHK…PLST), 252–291 (LSRK…IYHY), and 296–334 (HLGQ…KEWK). The helical transmembrane segment at 338–358 (IYALLFCLFMASVIAAYVFFE) threads the bilayer. The Lumenal segment spans residues 359–398 (NSDSFWKLPMGKDQKRPKISLFGGSSSTPSEDHSRWNLDL).

As to expression, ubiquitous with higher levels in flowers, roots and senescing leaves.

It localises to the endoplasmic reticulum membrane. In terms of biological role, involved in Pi uptake by facilitating the trafficking of PHT1-1/PHT1;1 from the endoplasmic reticulum to the plasma membrane. The chain is SEC12-like protein 1 (PHF1) from Arabidopsis thaliana (Mouse-ear cress).